Here is a 129-residue protein sequence, read N- to C-terminus: Bacteriohemerythrin (129 aa).

The Fe cation site is built by His-19, His-59, Glu-63, His-78, His-82, His-119, and Asp-124.

The protein belongs to the hemerythrin family. Monomer.

Oxygen-binding protein. May be involved in a storage mechanism or for delivery to oxygen-requiring enzymes. The oxygen-binding site contains two iron atoms. In Clostridium acetobutylicum (strain ATCC 824 / DSM 792 / JCM 1419 / IAM 19013 / LMG 5710 / NBRC 13948 / NRRL B-527 / VKM B-1787 / 2291 / W), this protein is Bacteriohemerythrin.